The sequence spans 49 residues: Large ribosomal subunit protein bL33 (49 aa).

Positions 18 to 49 (ITTKNKRNNPERLELKKYSPRLKRTTLHRETK) are disordered. The segment covering 25-34 (NNPERLELKK) has biased composition (basic and acidic residues).

It belongs to the bacterial ribosomal protein bL33 family.

This chain is Large ribosomal subunit protein bL33, found in Lysinibacillus sphaericus (strain C3-41).